The following is a 148-amino-acid chain: Deoxyuridine 5'-triphosphate nucleotidohydrolase (148 aa).

Residues 67 to 69 (RSG), Asn80, 84 to 86 (LID), and Met94 contribute to the substrate site.

This sequence belongs to the dUTPase family. Requires Mg(2+) as cofactor.

The enzyme catalyses dUTP + H2O = dUMP + diphosphate + H(+). It functions in the pathway pyrimidine metabolism; dUMP biosynthesis; dUMP from dCTP (dUTP route): step 2/2. Functionally, this enzyme is involved in nucleotide metabolism: it produces dUMP, the immediate precursor of thymidine nucleotides and it decreases the intracellular concentration of dUTP so that uracil cannot be incorporated into DNA. The sequence is that of Deoxyuridine 5'-triphosphate nucleotidohydrolase from Ralstonia pickettii (strain 12J).